The sequence spans 109 residues: MGGLIIEDLQEGFGKEAVKGKEITVHYTGWLENGTKFDSSLDRRQPLTITLGVGQVIKGWDEGFGGMKEGGKRKLTIPSEMGYGAHGAGGVIPPHATLIFEVELLKVYE.

Residues 20-108 (GKEITVHYTG…IFEVELLKVY (89 aa)) form the PPIase FKBP-type domain.

This sequence belongs to the FKBP-type PPIase family.

It carries out the reaction [protein]-peptidylproline (omega=180) = [protein]-peptidylproline (omega=0). Inhibited by FK506. PPIases accelerate the folding of proteins. This is FK506-binding protein (fbp) from Neisseria meningitidis serogroup B (strain ATCC BAA-335 / MC58).